A 928-amino-acid polypeptide reads, in one-letter code: BCAS3 microtubule associated cell migration factor (928 aa).

M1 is modified (N-acetylmethionine). A Glycyl lysine isopeptide (Lys-Gly) (interchain with G-Cter in SUMO1); alternate cross-link involves residue K215. K215 participates in a covalent cross-link: Glycyl lysine isopeptide (Lys-Gly) (interchain with G-Cter in SUMO2); alternate. 2 required for recruitment to preautophagosomal structure in response to mitophagy regions span residues 254–312 (RGGA…SRRS) and 437–560 (YGGQ…IKAP). Residues S461, S480, and S488 each carry the phosphoserine modification. Disordered regions lie at residues 472–518 (TSKQ…PRLS) and 795–816 (VRSD…RGVS). 2 stretches are compositionally biased toward low complexity: residues 480-494 (SPVP…GSPL) and 505-514 (NNFTNNNPGN). S838, S886, and S898 each carry phosphoserine. The tract at residues 868-928 (ESPSRDVVGS…PLSLFPTGFP (61 aa)) is disordered. Residues 887–901 (IETLSNSSGSTSGSI) show a composition bias toward low complexity.

It belongs to the BCAS3 family. In terms of assembly, interacts with histone H3, ESR1, KAT2B and PELP1; the interactions occur in a estrogen-dependent manner. Interacts with beta-tubulin and VIM. Interacts (via C-terminal) with PHAF1; the interaction is requrired for the association with the phagophore. Expressed in blood islands and yolk sac blood islands (at protein level). Highly expressed in mammary tumors. Expressed in eostrogen-induced epithelial cells of mammary glands. Expressed in brain, heart, kidney, lung, liver and spleen. Expressed in embryonic stem cells, embryoid bodies, endothelial cells and fibroblasts.

It localises to the nucleus. The protein localises to the cytoplasm. Its subcellular location is the cytoskeleton. It is found in the preautophagosomal structure. Functionally, functions synergistically with PELP1 as a transcriptional coactivator of estrogen receptor-responsive genes. Stimulates histone acetyltransferase activity. Binds to chromatin. Plays a role in angiogenesis. Participates in the regulation of cell polarity and directional endothelial cell migration by mediating both the activation and recruitment of CDC42 and the reorganization of the actin cytoskeleton at the cell leading edge. Promotes filipodia formation. Plays a regulatory role in autophagic activity. In complex with PHAF1, associates with the preautophagosomal structure during both non-selective and selective autophagy. Probably binds phosphatidylinositol 3-phosphate (PtdIns3P) which would mediate the recruitment preautophagosomal structures. The protein is BCAS3 microtubule associated cell migration factor of Mus musculus (Mouse).